The chain runs to 164 residues: Lipoprotein signal peptidase (164 aa).

The next 3 membrane-spanning stretches (helical) occupy residues 12 to 32 (WLWLVVVVLIIDLGSKYLILQ), 70 to 90 (WFFAGIAIGISVILAVMMYRS), and 102 to 122 (ALIIGGALGNLFDRLWHGFVV). Residues Asp-123 and Asp-141 contribute to the active site. The helical transmembrane segment at 137–157 (FNLADTAICVGAALIVLEGFL) threads the bilayer.

Belongs to the peptidase A8 family.

Its subcellular location is the cell inner membrane. It carries out the reaction Release of signal peptides from bacterial membrane prolipoproteins. Hydrolyzes -Xaa-Yaa-Zaa-|-(S,diacylglyceryl)Cys-, in which Xaa is hydrophobic (preferably Leu), and Yaa (Ala or Ser) and Zaa (Gly or Ala) have small, neutral side chains.. It functions in the pathway protein modification; lipoprotein biosynthesis (signal peptide cleavage). In terms of biological role, this protein specifically catalyzes the removal of signal peptides from prolipoproteins. The sequence is that of Lipoprotein signal peptidase from Escherichia coli O9:H4 (strain HS).